The chain runs to 759 residues: Catalase-peroxidase (759 aa).

The segment at 1–24 is disordered; it reads MTQDKCPFKEQPSQPNFAGGGTSN. Positions 96–242 form a cross-link, tryptophyl-tyrosyl-methioninium (Trp-Tyr) (with M-268); the sequence is WHSAGTYRVF…LAAAHMGLIY (147 aa). The active-site Proton acceptor is histidine 97. Positions 242-268 form a cross-link, tryptophyl-tyrosyl-methioninium (Tyr-Met) (with W-96); the sequence is YVNPEGPDGNPDPIAAAHDIRDTFGRM. Heme b is bound at residue histidine 283.

The protein belongs to the peroxidase family. Peroxidase/catalase subfamily. As to quaternary structure, homodimer or homotetramer. The cofactor is heme b. Post-translationally, formation of the three residue Trp-Tyr-Met cross-link is important for the catalase, but not the peroxidase activity of the enzyme.

Its subcellular location is the cytoplasm. It catalyses the reaction H2O2 + AH2 = A + 2 H2O. The enzyme catalyses 2 H2O2 = O2 + 2 H2O. Its function is as follows. Bifunctional enzyme with both catalase and broad-spectrum peroxidase activity. In Neosartorya fischeri (strain ATCC 1020 / DSM 3700 / CBS 544.65 / FGSC A1164 / JCM 1740 / NRRL 181 / WB 181) (Aspergillus fischerianus), this protein is Catalase-peroxidase.